The primary structure comprises 430 residues: UDP-glucuronate 4-epimerase 3 (430 aa).

2 consecutive transmembrane segments (helical) span residues 29 to 49 (SVAK…IFFY) and 90 to 110 (GFSV…SAAL). 92 to 123 (SVLVTGAAGFVGTHVSAALKRRGDGVLGLDNF) provides a ligand contact to NAD(+). Catalysis depends on Y242, which acts as the Proton acceptor.

This sequence belongs to the NAD(P)-dependent epimerase/dehydratase family. Homodimer. As to expression, in roots, leaves, siliques, flowers, pollen and stems.

It localises to the golgi apparatus. The protein resides in the golgi stack membrane. The enzyme catalyses UDP-alpha-D-glucuronate = UDP-alpha-D-galacturonate. Its function is as follows. Involved in the synthesis of the negatively charged monosaccharide that forms the backbone of pectic cell wall components. This Arabidopsis thaliana (Mouse-ear cress) protein is UDP-glucuronate 4-epimerase 3 (GAE3).